The following is a 611-amino-acid chain: UvrABC system protein C (611 aa).

The region spanning 12–96 (DQPGIYQYFD…IKQLKPKYNI (85 aa)) is the GIY-YIG domain. Residues 202 to 237 (EKILEILNQKMQKYAENLQFEEAAEIRDRIKSIESA) form the UVR domain.

The protein belongs to the UvrC family. As to quaternary structure, interacts with UvrB in an incision complex.

The protein resides in the cytoplasm. In terms of biological role, the UvrABC repair system catalyzes the recognition and processing of DNA lesions. UvrC both incises the 5' and 3' sides of the lesion. The N-terminal half is responsible for the 3' incision and the C-terminal half is responsible for the 5' incision. The protein is UvrABC system protein C of Nautilia profundicola (strain ATCC BAA-1463 / DSM 18972 / AmH).